Here is a 245-residue protein sequence, read N- to C-terminus: Chymotrypsinogen A (245 aa).

Intrachain disulfides connect Cys1/Cys122, Cys42/Cys58, Cys136/Cys201, Cys168/Cys182, and Cys191/Cys220. Residues 14 to 15 (SR) constitute a propeptide that is removed on maturation. In terms of domain architecture, Peptidase S1 spans 16–243 (IVNGEEAVPG…LVNWVQQTLA (228 aa)). Catalysis depends on charge relay system residues His57 and Asp102. The propeptide occupies 147 to 148 (TN). Ser195 (charge relay system) is an active-site residue.

It belongs to the peptidase S1 family.

It is found in the secreted. It localises to the extracellular space. It catalyses the reaction Preferential cleavage: Tyr-|-Xaa, Trp-|-Xaa, Phe-|-Xaa, Leu-|-Xaa.. This chain is Chymotrypsinogen A, found in Bos taurus (Bovine).